The following is a 469-amino-acid chain: RuvB-like helicase 2 (469 aa).

Position 73-80 (Gly73–Thr80) interacts with ATP.

The protein belongs to the RuvB family. Forms homohexameric rings. May form a dodecamer with rvb1 made of two stacked hexameric rings. Component of the chromatin remodeling Ino80 complex. Component of the RNA polymerase II holoenzyme complex.

The protein resides in the nucleus. The enzyme catalyses ATP + H2O = ADP + phosphate + H(+). In terms of biological role, has double-stranded DNA-stimulated ATPase and ATP-dependent DNA helicase (5' to 3') activity suggesting a role in nuclear processes such as recombination and transcription. Functionally, proposed core component of the chromatin remodeling Ino80 complex which is involved in transcriptional regulation, DNA replication and probably DNA repair. This Dictyostelium discoideum (Social amoeba) protein is RuvB-like helicase 2 (rvb2).